A 225-amino-acid polypeptide reads, in one-letter code: ATP-dependent dethiobiotin synthetase BioD (225 aa).

13 to 18 (NVGKTL) provides a ligand contact to ATP. A Mg(2+)-binding site is contributed by T17. K38 is a catalytic residue. T42 contributes to the substrate binding site. ATP-binding positions include D55, 116 to 119 (EGAG), 176 to 177 (NH), and 205 to 207 (PWL). D55 and E116 together coordinate Mg(2+).

This sequence belongs to the dethiobiotin synthetase family. As to quaternary structure, homodimer. The cofactor is Mg(2+).

Its subcellular location is the cytoplasm. It carries out the reaction (7R,8S)-7,8-diammoniononanoate + CO2 + ATP = (4R,5S)-dethiobiotin + ADP + phosphate + 3 H(+). The protein operates within cofactor biosynthesis; biotin biosynthesis; biotin from 7,8-diaminononanoate: step 1/2. Its function is as follows. Catalyzes a mechanistically unusual reaction, the ATP-dependent insertion of CO2 between the N7 and N8 nitrogen atoms of 7,8-diaminopelargonic acid (DAPA, also called 7,8-diammoniononanoate) to form a ureido ring. In Baumannia cicadellinicola subsp. Homalodisca coagulata, this protein is ATP-dependent dethiobiotin synthetase BioD.